The following is a 319-amino-acid chain: Extracellular phospholipase A1 (319 aa).

An N-terminal signal peptide occupies residues M1–A24.

The enzyme catalyses a 1,2-diacyl-sn-glycero-3-phosphocholine + H2O = a 2-acyl-sn-glycero-3-phosphocholine + a fatty acid + H(+). This is Extracellular phospholipase A1 (phlA) from Serratia liquefaciens.